The primary structure comprises 795 residues: Phenylalanine--tRNA ligase beta subunit (795 aa).

The tRNA-binding domain maps to 39 to 148 (ADEFHTVVVG…ADAPVGEDYR (110 aa)). Positions 401 to 476 (PKRDGITLRA…RVYGYNSIQA (76 aa)) constitute a B5 domain. Positions 454, 460, 463, and 464 each coordinate Mg(2+). The region spanning 701–794 (SRYPSIRRDL…LKSEFNATLR (94 aa)) is the FDX-ACB domain.

This sequence belongs to the phenylalanyl-tRNA synthetase beta subunit family. Type 1 subfamily. Tetramer of two alpha and two beta subunits. It depends on Mg(2+) as a cofactor.

The protein resides in the cytoplasm. The enzyme catalyses tRNA(Phe) + L-phenylalanine + ATP = L-phenylalanyl-tRNA(Phe) + AMP + diphosphate + H(+). In Idiomarina loihiensis (strain ATCC BAA-735 / DSM 15497 / L2-TR), this protein is Phenylalanine--tRNA ligase beta subunit.